A 414-amino-acid chain; its full sequence is NADH kinase POS5, mitochondrial (414 aa).

This sequence belongs to the NAD kinase family.

The protein localises to the mitochondrion matrix. The catalysed reaction is NADH + ATP = ADP + NADPH + H(+). Its function is as follows. Phosphorylates both NADH and NAD(+), with a twofold preference for NADH. Anti-oxidant factor and key source of the cellular reductant NADPH. This Saccharomyces cerevisiae (strain ATCC 204508 / S288c) (Baker's yeast) protein is NADH kinase POS5, mitochondrial (POS5).